We begin with the raw amino-acid sequence, 224 residues long: UPF0758 protein VIBHAR_00653 (224 aa).

Residues 102 to 224 form the MPN domain; the sequence is ALTSPEQTKL…SVSFAERGWI (123 aa). Zn(2+) contacts are provided by histidine 173, histidine 175, and aspartate 186. A JAMM motif motif is present at residues 173 to 186; sequence HNHPSGVAEPSQAD.

Belongs to the UPF0758 family.

The polypeptide is UPF0758 protein VIBHAR_00653 (Vibrio campbellii (strain ATCC BAA-1116)).